The primary structure comprises 433 residues: Protein translocase subunit SecY (433 aa).

10 helical membrane passes run 17-37, 71-91, 117-137, 141-161, 184-204, 212-232, 268-288, 310-330, 366-386, and 388-408; these read IVFTILILIVCRFGSFIPIPG, IFALAIMPYITASIIIQLMSV, LTVLLASFQAYGVAISLESIV, GPVVILAGFFFRITTVITLVV, LIIFIGIISGVPSAIISMFEL, PLIAIAVCIGVVVLIAIIIFF, GVIPPIFASSILLFPATLANF, YILLYVALIMFFSFFYTAIVF, LTVIGGIYLSVICVIPELLMN, and YVISLSLGGTSFLIVVNVVLD.

Belongs to the SecY/SEC61-alpha family. Component of the Sec protein translocase complex. Heterotrimer consisting of SecY, SecE and SecG subunits. The heterotrimers can form oligomers, although 1 heterotrimer is thought to be able to translocate proteins. Interacts with the ribosome. Interacts with SecDF, and other proteins may be involved. Interacts with SecA.

It localises to the cell inner membrane. In terms of biological role, the central subunit of the protein translocation channel SecYEG. Consists of two halves formed by TMs 1-5 and 6-10. These two domains form a lateral gate at the front which open onto the bilayer between TMs 2 and 7, and are clamped together by SecE at the back. The channel is closed by both a pore ring composed of hydrophobic SecY resides and a short helix (helix 2A) on the extracellular side of the membrane which forms a plug. The plug probably moves laterally to allow the channel to open. The ring and the pore may move independently. This chain is Protein translocase subunit SecY, found in Rickettsia conorii (strain ATCC VR-613 / Malish 7).